A 348-amino-acid polypeptide reads, in one-letter code: NADH-ubiquinone oxidoreductase chain 2 (348 aa).

10 helical membrane passes run 3 to 23 (PFIL…TFAS), 24 to 44 (SHWL…IPLM), 60 to 80 (FITQ…NAWI), 95 to 115 (ASML…HFWL), 136 to 156 (LAPF…ITFL), 177 to 197 (ILAY…QFNQ), 198 to 218 (QLAL…FMIF), 239 to 259 (LTAI…LSGF), 273 to 293 (DIPL…YFYL), and 325 to 345 (LAIS…TLAL).

This sequence belongs to the complex I subunit 2 family.

The protein resides in the mitochondrion inner membrane. The catalysed reaction is a ubiquinone + NADH + 5 H(+)(in) = a ubiquinol + NAD(+) + 4 H(+)(out). Its function is as follows. Core subunit of the mitochondrial membrane respiratory chain NADH dehydrogenase (Complex I) that is believed to belong to the minimal assembly required for catalysis. Complex I functions in the transfer of electrons from NADH to the respiratory chain. The immediate electron acceptor for the enzyme is believed to be ubiquinone. The protein is NADH-ubiquinone oxidoreductase chain 2 (MT-ND2) of Gadus morhua (Atlantic cod).